A 503-amino-acid chain; its full sequence is MHRVMGIETEYGISVPHQPNANAMAASSQVVNAYAPIGAPAQRQARWDFEEENPLRDARGFEVAREAADPSQLTDEDLGLANVILTNGARLYVDHAHPEYSTPEVTNPRDAVLWDKAGERIMAEAARRAADLPMGWTIQLYKNNTDNKGASYGCHENYLMNRSTPFADIVRHLIPFFVTRQVFCGAGRVGIGADGRGEGFQLSQRADFFEVEVGLETTLKRPIINTRDEPHADPEKYRRLHVIIGDANMSEIATYLKLGTTALVLAMIEDGFLSQDFSVESPVGALRAVSHDPTLRYQLRLHDGRRLTAVQLQMEYLEQARKYVEDRFGTDVDDMTRDVLDRWETTLVRLADDPMQLSRDLDWVAKLSILEGYRQRENLPWSAHKLQLVDLQYHDVRPDRGLYNRLVARGRMNLLVDEAAVRTAMHEPPNDTRAYFRGRCLAKFGAEIAAASWDSVIFDLPGRDSLQRVPTLEPLRGTRAHVGDLLDRCRSATELVAALTGGR.

Mg(2+) is bound by residues glutamate 8 and tyrosine 92. The active-site Proton acceptor is the aspartate 94. Glutamate 99 is a binding site for Mg(2+). 101 to 102 serves as a coordination point for ATP; that stretch reads ST. Histidine 155 provides a ligand contact to Mg(2+). Asparagine 157 and arginine 239 together coordinate ATP. Histidine 241 lines the Mg(2+) pocket.

Belongs to the Pup ligase/Pup deamidase family. Pup deamidase subfamily. Likely interacts with the C-terminal half of the prokaryotic ubiquitin-like protein Pup. ATP serves as cofactor.

Its pathway is protein degradation; proteasomal Pup-dependent pathway. Its function is as follows. Displays depupylase (DPUP) activity, removing conjugated Pup from target proteins; is thus involved in the recycling of Pup and may function similarly to deubiquitinases (DUBs) in eukaryotes to prevent or promote proteasomal degradation of certain proteins. Is also able to catalyze the deamidation of the C-terminal glutamine to glutamate in a variant of the prokaryotic ubiquitin-like protein Pup; however, since Pup from A.cellulolyticus possesses a C-terminal glutamate, this deamidase activity may be of no significance in vivo. The sequence is that of Depupylase (dop) from Acidothermus cellulolyticus (strain ATCC 43068 / DSM 8971 / 11B).